A 355-amino-acid chain; its full sequence is UDP-N-acetylglucosamine--N-acetylmuramyl-(pentapeptide) pyrophosphoryl-undecaprenol N-acetylglucosamine transferase (355 aa).

UDP-N-acetyl-alpha-D-glucosamine-binding positions include threonine 15–glycine 17, asparagine 127, arginine 163, serine 191, isoleucine 244, alanine 263–glutamate 268, and glutamine 288.

The protein belongs to the glycosyltransferase 28 family. MurG subfamily.

Its subcellular location is the cell inner membrane. The enzyme catalyses di-trans,octa-cis-undecaprenyl diphospho-N-acetyl-alpha-D-muramoyl-L-alanyl-D-glutamyl-meso-2,6-diaminopimeloyl-D-alanyl-D-alanine + UDP-N-acetyl-alpha-D-glucosamine = di-trans,octa-cis-undecaprenyl diphospho-[N-acetyl-alpha-D-glucosaminyl-(1-&gt;4)]-N-acetyl-alpha-D-muramoyl-L-alanyl-D-glutamyl-meso-2,6-diaminopimeloyl-D-alanyl-D-alanine + UDP + H(+). The protein operates within cell wall biogenesis; peptidoglycan biosynthesis. Functionally, cell wall formation. Catalyzes the transfer of a GlcNAc subunit on undecaprenyl-pyrophosphoryl-MurNAc-pentapeptide (lipid intermediate I) to form undecaprenyl-pyrophosphoryl-MurNAc-(pentapeptide)GlcNAc (lipid intermediate II). The chain is UDP-N-acetylglucosamine--N-acetylmuramyl-(pentapeptide) pyrophosphoryl-undecaprenol N-acetylglucosamine transferase from Salmonella gallinarum (strain 287/91 / NCTC 13346).